We begin with the raw amino-acid sequence, 338 residues long: Nicotinate-nucleotide--dimethylbenzimidazole phosphoribosyltransferase (338 aa).

E305 serves as the catalytic Proton acceptor.

It belongs to the CobT family.

It carries out the reaction 5,6-dimethylbenzimidazole + nicotinate beta-D-ribonucleotide = alpha-ribazole 5'-phosphate + nicotinate + H(+). The protein operates within nucleoside biosynthesis; alpha-ribazole biosynthesis; alpha-ribazole from 5,6-dimethylbenzimidazole: step 1/2. Its function is as follows. Catalyzes the synthesis of alpha-ribazole-5'-phosphate from nicotinate mononucleotide (NAMN) and 5,6-dimethylbenzimidazole (DMB). This chain is Nicotinate-nucleotide--dimethylbenzimidazole phosphoribosyltransferase, found in Rhizobium johnstonii (strain DSM 114642 / LMG 32736 / 3841) (Rhizobium leguminosarum bv. viciae).